The sequence spans 230 residues: Phosphoribosylaminoimidazole-succinocarboxamide synthase (230 aa).

This sequence belongs to the SAICAR synthetase family.

It catalyses the reaction 5-amino-1-(5-phospho-D-ribosyl)imidazole-4-carboxylate + L-aspartate + ATP = (2S)-2-[5-amino-1-(5-phospho-beta-D-ribosyl)imidazole-4-carboxamido]succinate + ADP + phosphate + 2 H(+). It participates in purine metabolism; IMP biosynthesis via de novo pathway; 5-amino-1-(5-phospho-D-ribosyl)imidazole-4-carboxamide from 5-amino-1-(5-phospho-D-ribosyl)imidazole-4-carboxylate: step 1/2. The protein is Phosphoribosylaminoimidazole-succinocarboxamide synthase of Thermotoga sp. (strain RQ2).